Here is a 408-residue protein sequence, read N- to C-terminus: G2/mitotic-specific cyclin-B (408 aa).

This sequence belongs to the cyclin family. Cyclin AB subfamily. As to quaternary structure, interacts with the CDC2 protein kinase to form a serine/threonine kinase holoenzyme complex also known as maturation promoting factor (MPF). The cyclin subunit imparts substrate specificity to the complex.

Its function is as follows. Essential for the control of the cell cycle at the G2/M (mitosis) transition. The chain is G2/mitotic-specific cyclin-B from Patella vulgata (Common limpet).